A 140-amino-acid chain; its full sequence is MRHGKAGRKLNRTASHRKAMFANMAASLITHEQIVTTLPKAKEIRPIVEKLVTLGKRGDLHARRQAISQIRDAAVVSKLFDTIATRYATRNGGYLRIMKAGFRQGDNAAMAVIEFVDRDAYAKGAADKARVAAEEQAVAA.

It belongs to the bacterial ribosomal protein bL17 family. In terms of assembly, part of the 50S ribosomal subunit. Contacts protein L32.

This Rhizobium johnstonii (strain DSM 114642 / LMG 32736 / 3841) (Rhizobium leguminosarum bv. viciae) protein is Large ribosomal subunit protein bL17.